The sequence spans 248 residues: MTMSSYLINSNYIEPSFPPCDEYQQSGYIPNPGDYYERPKDTGFPHHDEPSYPRSNYTESGYDYGNVPATGLDDFGDGHHAQPQPVPQSHGPRLTAAPDGGAGANASKDCSLASEVYPGVAKGKEPVVYPWMKKVHVSTVNASYTGGVPKRSRTAYTRQQALELEKEFHFNRYLTRRRRVEIAHTMCLSERQVKIWFQNRRMKWKKEHKLPNTKIRSSSSASSSASGAQQQQIKTGQQLVPTPCTAGL.

Positions 23–107 (YQQSGYIPNP…PDGGAGANAS (85 aa)) are disordered. Over residues 35–51 (YYERPKDTGFPHHDEPS) the composition is skewed to basic and acidic residues. The Antp-type hexapeptide signature appears at 128 to 133 (VYPWMK). The segment at residues 149–208 (PKRSRTAYTRQQALELEKEFHFNRYLTRRRRVEIAHTMCLSERQVKIWFQNRRMKWKKEH) is a DNA-binding region (homeobox). A disordered region spans residues 207–248 (EHKLPNTKIRSSSSASSSASGAQQQQIKTGQQLVPTPCTAGL). The segment covering 217 to 238 (SSSSASSSASGAQQQQIKTGQQ) has biased composition (low complexity).

Belongs to the Antp homeobox family. Deformed subfamily.

The protein resides in the nucleus. Functionally, sequence-specific transcription factor which is part of a developmental regulatory system that provides cells with specific positional identities on the anterior-posterior axis. This chain is Homeobox protein Hox-A4 (hoxa4), found in Morone saxatilis (Striped bass).